A 247-amino-acid chain; its full sequence is Chymase (247 aa).

A signal peptide spans 1–19 (MLLLPLPLLLFFLCSRAEA). Residues 20-21 (GE) constitute a propeptide, activation peptide. The Peptidase S1 domain occupies 22–245 (IIGGTECKPH…YRPWINKILQ (224 aa)). Cys51 and Cys67 form a disulfide bridge. Catalysis depends on His66, which acts as the Charge relay system. 2 N-linked (GlcNAc...) asparagine glycosylation sites follow: Asn80 and Asn103. Asp110 (charge relay system) is an active-site residue. 2 disulfide bridges follow: Cys144-Cys209 and Cys175-Cys188. Residue Ser203 is the Charge relay system of the active site.

Belongs to the peptidase S1 family. Granzyme subfamily.

It is found in the secreted. It localises to the cytoplasmic granule. The catalysed reaction is Preferential cleavage: Phe-|-Xaa &gt; Tyr-|-Xaa &gt; Trp-|-Xaa &gt; Leu-|-Xaa.. In terms of biological role, major secreted protease of mast cells with suspected roles in vasoactive peptide generation, extracellular matrix degradation, and regulation of gland secretion. The chain is Chymase (CMA1) from Macaca fascicularis (Crab-eating macaque).